The chain runs to 555 residues: Zinc finger and SCAN domain-containing protein 21 (555 aa).

Disordered regions lie at residues 1–74 (MTKV…SKDK), 102–133 (TIKAEEDDEKDKGHPSPEISRQRFRQFGYHDT), 204–243 (LDEPGLQVSSPPNEQKQSWEKMSTSGTAMESLSSTETQHV), and 263–354 (EEVF…RPAP). A run of 3 repeats spans residues 18 to 56 (ESMGPSPIKVEEDEEKDKCCPTLELSHKHFRQSGNQDTL), 57 to 95 (EPMGPSTIKAEEDESKDKCRPNLEISRKSFKQFGYQDTL), and 96 to 134 (EQLGPSTIKAEEDDEKDKGHPSPEISRQRFRQFGYHDTP). A 3 X 39 AA approximate tandem repeats region spans residues 18-134 (ESMGPSPIKV…FRQFGYHDTP (117 aa)). Residue Lys-26 forms a Glycyl lysine isopeptide (Lys-Gly) (interchain with G-Cter in SUMO2) linkage. The 83-residue stretch at 122-204 (RQRFRQFGYH…TLLEDLEQEL (83 aa)) folds into the SCAN box domain. Positions 210-240 (QVSSPPNEQKQSWEKMSTSGTAMESLSSTET) are enriched in polar residues. A compositionally biased stretch (basic and acidic residues) spans 280-302 (PQKEDSADEHRSSEEESHADGLK). Residues Lys-302 and Lys-313 each participate in a glycyl lysine isopeptide (Lys-Gly) (interchain with G-Cter in SUMO2) cross-link. Basic and acidic residues predominate over residues 316-332 (SRSERQWANNLERERGT). 7 C2H2-type zinc fingers span residues 359–381 (YICAECGKAFSNSSNLTKHRRTH), 387–409 (YVCTKCGKAFSHSSNLTLHYRTH), 415–436 (YDCKCGKAFGQSSDLLKHQRMH), 442–464 (YQCKDCGKAFSGKGSLIRHYRIH), 470–492 (YQCNECGKSFSQHAGLSSHQRLH), 498–520 (YKCKECGKAFNHSSNFNKHHRIH), and 526–548 (YWCSHCGKTFCSKSNLSKHQRVH). Residue Lys-431 forms a Glycyl lysine isopeptide (Lys-Gly) (interchain with G-Cter in SUMO2) linkage.

Belongs to the krueppel C2H2-type zinc-finger protein family. As to expression, expressed predominantly in the spermatocytes and spermatids of adult testes. It is also present at lower levels in the ovary, brain, spleen, embryo and fetus.

Its subcellular location is the nucleus. Its function is as follows. Strong transcriptional activator. Plays an important role in spermatogenesis; essential for the progression of meiotic prophase I in spermatocytes. The protein is Zinc finger and SCAN domain-containing protein 21 (Zscan21) of Mus musculus (Mouse).